Consider the following 105-residue polypeptide: Iron-sulfur cluster assembly protein CyaY (105 aa).

The protein belongs to the frataxin family.

In terms of biological role, involved in iron-sulfur (Fe-S) cluster assembly. May act as a regulator of Fe-S biogenesis. The chain is Iron-sulfur cluster assembly protein CyaY from Dechloromonas aromatica (strain RCB).